Reading from the N-terminus, the 90-residue chain is Cell division topological specificity factor (90 aa).

This sequence belongs to the MinE family.

In terms of biological role, prevents the cell division inhibition by proteins MinC and MinD at internal division sites while permitting inhibition at polar sites. This ensures cell division at the proper site by restricting the formation of a division septum at the midpoint of the long axis of the cell. In Pelotomaculum thermopropionicum (strain DSM 13744 / JCM 10971 / SI), this protein is Cell division topological specificity factor.